A 116-amino-acid chain; its full sequence is Aspartate 1-decarboxylase (116 aa).

S25 serves as the catalytic Schiff-base intermediate with substrate; via pyruvic acid. At S25 the chain carries Pyruvic acid (Ser). Residue T57 participates in substrate binding. The Proton donor role is filled by Y58. 73–75 (GAA) lines the substrate pocket.

This sequence belongs to the PanD family. As to quaternary structure, heterooctamer of four alpha and four beta subunits. It depends on pyruvate as a cofactor. Post-translationally, is synthesized initially as an inactive proenzyme, which is activated by self-cleavage at a specific serine bond to produce a beta-subunit with a hydroxyl group at its C-terminus and an alpha-subunit with a pyruvoyl group at its N-terminus.

The protein localises to the cytoplasm. The enzyme catalyses L-aspartate + H(+) = beta-alanine + CO2. It functions in the pathway cofactor biosynthesis; (R)-pantothenate biosynthesis; beta-alanine from L-aspartate: step 1/1. Its function is as follows. Catalyzes the pyruvoyl-dependent decarboxylation of aspartate to produce beta-alanine. The polypeptide is Aspartate 1-decarboxylase (Leptospira interrogans serogroup Icterohaemorrhagiae serovar copenhageni (strain Fiocruz L1-130)).